The primary structure comprises 1383 residues: MRSLIYFWLLLPVLPTLSLPQDVTRCQSTTNFRRFFSKFNVQAPAVVVLGGYLPSMNSSSWYCGTGIETASGVHGIFLSYIDSGQGFEIGISQEPFDPSGYQLYLHKATNGNTNAIARLRICQFPDNKTLGPTVNDVTTGRNCLFNKAIPAYMRDGKDIVVGITWDNDRVTVFADKIYHFYLKNDWSRVATRCYNRRSCAMQYVYTPTYYMLNVTSAGEDGIYYEPCTANCTGYAANVFATDSNGHIPEGFSFNNWFLLSNDSTLLHGKVVSNQPLLVNCLLAIPKIYGLGQFFSFNHTMDGVCNGAAVDRAPEALRFNINDTSVILAEGSIVLHTALGTNLSFVCSNSSDPHLAIFAIPLGATEVPYYCFLKVDTYNSTVYKFLAVLPPTVREIVITKYGDVYVNGFGYLHLGLLDAVTINFTGHGTDDDVSGFWTIASTNFVDALIEVQGTSIQRILYCDDPVSQLKCSQVAFDLDDGFYPISSRNLLSHEQPISFVTLPSFNDHSFVNITVSAAFGGLSSANLVASDTTINGFSSFCVDTRQFTITLFYNVTNSYGYVSKSQDSNCPFTLQSVNDYLSFSKFCVSTSLLAGACTIDLFGYPAFGSGVKLTSLYFQFTKGELITGTPKPLEGITDVSFMTLDVCTKYTIYGFKGEGIITLTNSSILAGVYYTSDSGQLLAFKNVTSGAVYSVTPCSFSEQAAYVNDDIVGVISSLSNSTFNNTRELPGFFYHSNDGSNCTEPVLVYSNIGVCKSGSIGYVPSQYGQVKIAPTVTGNISIPTNFSMSIRTEYLQLYNTPVSVDCATYVCNGNSRCKQLLTQYTAACKTIESALQLSARLESVEVNSMLTISEEALQLATISSFNGDGYNFTNVLGASVYDPASGRVVQKRSVIEDLLFNKVVTNGLGTVDEDYKRCSNGRSVADLVCAQYYSGVMVLPGVVDAEKLHMYSASLIGGMALGGITAAAALPFSYAVQARLNYLALQTDVLQRNQQLLAESFNSAIGNITSAFESVKEAISQTSKGLNTVAHALTKVQEVVNSQGSALNQLTVQLQHNFQAISSSIDDIYSRLDILSADVQVDRLITGRLSALNAFVAQTLTKYTEVQASRKLAQQKVNECVKSQSQRYGFCGGDGEHIFSLVQAAPQGLLFLHTVLVPGDFVNVLAIAGLCVNGEIALTLREPGLVLFTHELQTYTATEYFVSSRRMFEPRKPTVSDFVQIESCVVTYVNLTSDQLPDVIPDYIDVNKTLDEILASLPNRTGPSLPLDVFNATYLNLTGEIADLEQRSESLRNTTEELRSLINNINNTLVDLEWLNRVETYIKWPWWVWLIIVIVLIFVVSLLVFCCISTGCCGCCGCCGACFSGCCRGPRLQPYEAFEKVHVQ.

Positions 1–25 (MRSLIYFWLLLPVLPTLSLPQDVTR) are cleaved as a signal peptide. Residues 26-734 (CQSTTNFRRF…TRELPGFFYH (709 aa)) form an S1 region. Residues 26–1324 (CQSTTNFRRF…NRVETYIKWP (1299 aa)) lie on the Virion surface side of the membrane. The tract at residues 617–745 (FQFTKGELIT…NDGSNCTEPV (129 aa)) is interaction with host ANPEP. The S2 stretch occupies residues 735–1383 (SNDGSNCTEP…YEAFEKVHVQ (649 aa)). The interval 955-975 (IGGMALGGITAAAALPFSYAV) is fusion peptide. The interval 969 to 1088 (LPFSYAVQAR…QVDRLITGRL (120 aa)) is heptad repeat 1 (HR1). Coiled-coil stretches lie at residues 1036 to 1080 (QEVV…DVQV) and 1272 to 1314 (TYLN…LEWL). Residues 1240-1336 (PDYIDVNKTL…VWLIIVIVLI (97 aa)) are heptad repeat 2 (HR2). A helical membrane pass occupies residues 1325-1344 (WWVWLIIVIVLIFVVSLLVF). Topologically, residues 1345–1383 (CCISTGCCGCCGCCGACFSGCCRGPRLQPYEAFEKVHVQ) are intravirion. The short motif at 1379 to 1383 (KVHVQ) is the KxHxx element.

This sequence belongs to the alphacoronaviruses spike protein family. As to quaternary structure, homotrimer. During virus morphogenesis, found in a complex with M and HE proteins. Interacts with host ANPEP.

It localises to the virion membrane. It is found in the host endoplasmic reticulum-Golgi intermediate compartment membrane. Functionally, S1 region attaches the virion to the cell membrane by interacting with host ANPEP/aminopeptidase N, initiating the infection. Binding to the receptor probably induces conformational changes in the S glycoprotein unmasking the fusion peptide of S2 region and activating membranes fusion. S2 region belongs to the class I viral fusion protein. Under the current model, the protein has at least 3 conformational states: pre-fusion native state, pre-hairpin intermediate state, and post-fusion hairpin state. During viral and target cell membrane fusion, the coiled coil regions (heptad repeats) regions assume a trimer-of-hairpins structure, positioning the fusion peptide in close proximity to the C-terminal region of the ectodomain. The formation of this structure appears to drive apposition and subsequent fusion of viral and target cell membranes. This chain is Spike glycoprotein, found in Porcine epidemic diarrhea virus (strain CV777) (PEDV).